Here is a 663-residue protein sequence, read N- to C-terminus: Shugoshin 1 (663 aa).

2 coiled-coil regions span residues Lys-8 to Lys-29 and Asp-110 to Glu-132. 3 disordered regions span residues Arg-207–Asn-250, Glu-278–Gly-401, and Phe-417–Asn-478. 4 stretches are compositionally biased toward basic and acidic residues: residues Arg-231–Glu-242, Thr-280–Asp-304, Lys-339–Arg-358, and Lys-366–Met-394. Residues Asn-427–Glu-437 are compositionally biased toward low complexity. Residues Ser-443–Lys-453 show a composition bias toward basic and acidic residues.

Belongs to the shugoshin family. Binds microtubules. In terms of processing, ubiquitinated by the anaphase promoting complex (APC) at the onset of anaphase, conducting to its degradation.

It is found in the nucleus. The protein resides in the chromosome. Its subcellular location is the centromere. It localises to the kinetochore. The protein localises to the nucleus speckle. Its function is as follows. Plays a central role in chromosome cohesion during mitosis by preventing premature dissociation of cohesin complex from centromeres after prophase, when most of cohesin complex dissociates from chromosomes arms. May act by preventing phosphorylation of the stag2 subunit of cohesin complex at the centromere, ensuring cohesin persistence at centromere until cohesin cleavage by espl1/separase at anaphase. May regulate kinetochore microtubule stability in mitosis, possibly to sense tension on mitotic chromosomes. In Xenopus laevis (African clawed frog), this protein is Shugoshin 1.